The primary structure comprises 97 residues: MAQKLDDSTRDEHLAPLMRAGWEMVEGRDAIKKTFVFGDFTEAFAFMTGTALWAEKWDHHPEWSNVYKTVEVTLTTHDVGGLSELDIKLASKMDNLA.

This sequence belongs to the pterin-4-alpha-carbinolamine dehydratase family.

It carries out the reaction (4aS,6R)-4a-hydroxy-L-erythro-5,6,7,8-tetrahydrobiopterin = (6R)-L-erythro-6,7-dihydrobiopterin + H2O. This is Putative pterin-4-alpha-carbinolamine dehydratase from Dinoroseobacter shibae (strain DSM 16493 / NCIMB 14021 / DFL 12).